Reading from the N-terminus, the 157-residue chain is C-type lectin 9a (157 aa).

The first 23 residues, 1–23, serve as a signal peptide directing secretion; it reads MGRFIFVSFGLLVVFLSLSGTGA. Disulfide bonds link Cys27–Cys38, Cys55–Cys151, and Cys126–Cys143. In terms of domain architecture, C-type lectin spans 34–152; it reads YDQYCYKPFN…CQAKKPFVCK (119 aa).

This sequence belongs to the snaclec family. As to quaternary structure, heteromultimer; disulfide-linked. In terms of tissue distribution, expressed by the venom gland.

It localises to the secreted. In terms of biological role, interferes with one step of hemostasis (modulation of platelet aggregation, or coagulation cascade, for example). This Crotalus adamanteus (Eastern diamondback rattlesnake) protein is C-type lectin 9a.